Consider the following 231-residue polypeptide: Potassium/proton antiporter CemA (231 aa).

The next 3 membrane-spanning stretches (helical) occupy residues 9–29 (FIPL…SFLF), 116–136 (IICF…LIIL), and 191–211 (IISG…KYWI).

The protein belongs to the CemA family.

Its subcellular location is the plastid. It localises to the chloroplast inner membrane. The catalysed reaction is K(+)(in) + H(+)(out) = K(+)(out) + H(+)(in). In terms of biological role, contributes to K(+)/H(+) antiport activity by supporting proton efflux to control proton extrusion and homeostasis in chloroplasts in a light-dependent manner to modulate photosynthesis. Prevents excessive induction of non-photochemical quenching (NPQ) under continuous-light conditions. Indirectly promotes efficient inorganic carbon uptake into chloroplasts. The protein is Potassium/proton antiporter CemA of Manihot esculenta (Cassava).